Reading from the N-terminus, the 742-residue chain is Phosphoribosylformylglycinamidine synthase subunit PurL (742 aa).

The active site involves H54. Y57 and K96 together coordinate ATP. E98 lines the Mg(2+) pocket. Substrate contacts are provided by residues 99–102 (SHNH) and R121. H100 acts as the Proton acceptor in catalysis. D122 serves as a coordination point for Mg(2+). Residue Q245 participates in substrate binding. Mg(2+) is bound at residue D273. Substrate is bound at residue 317-319 (ESQ). Residues D500 and G537 each contribute to the ATP site. N538 provides a ligand contact to Mg(2+). Substrate is bound at residue S540.

Belongs to the FGAMS family. In terms of assembly, monomer. Part of the FGAM synthase complex composed of 1 PurL, 1 PurQ and 2 PurS subunits.

Its subcellular location is the cytoplasm. It carries out the reaction N(2)-formyl-N(1)-(5-phospho-beta-D-ribosyl)glycinamide + L-glutamine + ATP + H2O = 2-formamido-N(1)-(5-O-phospho-beta-D-ribosyl)acetamidine + L-glutamate + ADP + phosphate + H(+). The protein operates within purine metabolism; IMP biosynthesis via de novo pathway; 5-amino-1-(5-phospho-D-ribosyl)imidazole from N(2)-formyl-N(1)-(5-phospho-D-ribosyl)glycinamide: step 1/2. Functionally, part of the phosphoribosylformylglycinamidine synthase complex involved in the purines biosynthetic pathway. Catalyzes the ATP-dependent conversion of formylglycinamide ribonucleotide (FGAR) and glutamine to yield formylglycinamidine ribonucleotide (FGAM) and glutamate. The FGAM synthase complex is composed of three subunits. PurQ produces an ammonia molecule by converting glutamine to glutamate. PurL transfers the ammonia molecule to FGAR to form FGAM in an ATP-dependent manner. PurS interacts with PurQ and PurL and is thought to assist in the transfer of the ammonia molecule from PurQ to PurL. The chain is Phosphoribosylformylglycinamidine synthase subunit PurL from Geobacillus thermodenitrificans (strain NG80-2).